Here is a 215-residue protein sequence, read N- to C-terminus: UPF0502 protein YceH (215 aa).

Belongs to the UPF0502 family.

This is UPF0502 protein YceH from Salmonella heidelberg (strain SL476).